Reading from the N-terminus, the 433-residue chain is MGLTDYCECRFSAGNGGNGIIAWRREAHYDKGGPGGGNGGNGGNVVLQADHNCDSLFFLKNKKHLFAESGGNGKPDLAHGKNGEDLVIKVPVGTTVRDLDTNQILMDFVHDQQSFILCYGGKGGKGNAAFKSPIMRAPNLYENGDKGQSLHVSLEIKYLANVGIVGFPNTGKSTLISKLSNAKPKIANYRFTTLVPVLGVVKHNDQSLVFADIPGLIENASEGSGLGHYFLRHIERCEILIHLISLDPVDHDDPCQAYEQIMRELSKYSQLLVKKKMLVVANKTDVDLDGTRFQKLAQYLENKGIPLFKISALKQELGDLVAQVFALHQKTLAQFGANKFHLPMEMEKHYVFEQASETDHDPLNIERDALGRWHVECKRLHYWFDKIPQTTLDNIRRLGNKIKEVGIEDQLKVAGAKKGDVIVFAGQEFVIND.

The Obg domain occupies 1 to 159 (MGLTDYCECR…LHVSLEIKYL (159 aa)). The OBG-type G domain maps to 160–329 (ANVGIVGFPN…LVAQVFALHQ (170 aa)). GTP is bound by residues 166 to 173 (GFPNTGKS), 191 to 195 (FTTLV), 212 to 215 (DIPG), 282 to 285 (NKTD), and 310 to 312 (ISA). Positions 173 and 193 each coordinate Mg(2+). The 79-residue stretch at 355 to 433 (ASETDHDPLN…FAGQEFVIND (79 aa)) folds into the OCT domain.

This sequence belongs to the TRAFAC class OBG-HflX-like GTPase superfamily. OBG GTPase family. In terms of assembly, monomer. Requires Mg(2+) as cofactor.

Its subcellular location is the cytoplasm. Its function is as follows. An essential GTPase which binds GTP, GDP and possibly (p)ppGpp with moderate affinity, with high nucleotide exchange rates and a fairly low GTP hydrolysis rate. Plays a role in control of the cell cycle, stress response, ribosome biogenesis and in those bacteria that undergo differentiation, in morphogenesis control. The sequence is that of GTPase Obg from Mycoplasma pneumoniae (strain ATCC 29342 / M129 / Subtype 1) (Mycoplasmoides pneumoniae).